Reading from the N-terminus, the 420-residue chain is Gamma-glutamyl phosphate reductase (420 aa).

Belongs to the gamma-glutamyl phosphate reductase family.

The protein resides in the cytoplasm. It carries out the reaction L-glutamate 5-semialdehyde + phosphate + NADP(+) = L-glutamyl 5-phosphate + NADPH + H(+). Its pathway is amino-acid biosynthesis; L-proline biosynthesis; L-glutamate 5-semialdehyde from L-glutamate: step 2/2. Its function is as follows. Catalyzes the NADPH-dependent reduction of L-glutamate 5-phosphate into L-glutamate 5-semialdehyde and phosphate. The product spontaneously undergoes cyclization to form 1-pyrroline-5-carboxylate. The polypeptide is Gamma-glutamyl phosphate reductase (Streptococcus gordonii (strain Challis / ATCC 35105 / BCRC 15272 / CH1 / DL1 / V288)).